The chain runs to 83 residues: Conotoxin Pu6.1 (83 aa).

Residues 1–19 (MKLVLAIVLILMLVSLSTG) form the signal peptide. Residues 20–42 (AEESGQEISMVGPPLYIWDPIPP) constitute a propeptide that is removed on maturation. Disulfide bonds link C43–C57, C50–C62, and C56–C78.

Belongs to the conotoxin I3 superfamily. As to expression, expressed by the venom duct.

It is found in the secreted. The protein is Conotoxin Pu6.1 of Conus pulicarius (Flea-bitten cone).